We begin with the raw amino-acid sequence, 362 residues long: Histidinol-phosphate aminotransferase (362 aa).

The residue at position 218 (K218) is an N6-(pyridoxal phosphate)lysine.

This sequence belongs to the class-II pyridoxal-phosphate-dependent aminotransferase family. Histidinol-phosphate aminotransferase subfamily. Homodimer. Pyridoxal 5'-phosphate serves as cofactor.

It carries out the reaction L-histidinol phosphate + 2-oxoglutarate = 3-(imidazol-4-yl)-2-oxopropyl phosphate + L-glutamate. The protein operates within amino-acid biosynthesis; L-histidine biosynthesis; L-histidine from 5-phospho-alpha-D-ribose 1-diphosphate: step 7/9. In Xanthomonas campestris pv. campestris (strain 8004), this protein is Histidinol-phosphate aminotransferase.